Reading from the N-terminus, the 491-residue chain is Aspartyl/glutamyl-tRNA(Asn/Gln) amidotransferase subunit B (491 aa).

It belongs to the GatB/GatE family. GatB subfamily. As to quaternary structure, heterotrimer of A, B and C subunits.

It carries out the reaction L-glutamyl-tRNA(Gln) + L-glutamine + ATP + H2O = L-glutaminyl-tRNA(Gln) + L-glutamate + ADP + phosphate + H(+). The enzyme catalyses L-aspartyl-tRNA(Asn) + L-glutamine + ATP + H2O = L-asparaginyl-tRNA(Asn) + L-glutamate + ADP + phosphate + 2 H(+). Functionally, allows the formation of correctly charged Asn-tRNA(Asn) or Gln-tRNA(Gln) through the transamidation of misacylated Asp-tRNA(Asn) or Glu-tRNA(Gln) in organisms which lack either or both of asparaginyl-tRNA or glutaminyl-tRNA synthetases. The reaction takes place in the presence of glutamine and ATP through an activated phospho-Asp-tRNA(Asn) or phospho-Glu-tRNA(Gln). This Nostoc sp. (strain PCC 7120 / SAG 25.82 / UTEX 2576) protein is Aspartyl/glutamyl-tRNA(Asn/Gln) amidotransferase subunit B.